Here is a 257-residue protein sequence, read N- to C-terminus: Flap endonuclease Xni (257 aa).

Residue aspartate 109 participates in Mg(2+) binding. Positions 165–255 constitute a 5'-3' exonuclease domain; that stretch reads LKPEQLADYW…FNLQDIRYEK (91 aa). Positions 176, 177, 187, and 190 each coordinate K(+). The segment at 189–194 is interaction with DNA; the sequence is GIGPKA.

The protein belongs to the Xni family. It depends on Mg(2+) as a cofactor. The cofactor is K(+).

Its function is as follows. Has flap endonuclease activity. During DNA replication, flap endonucleases cleave the 5'-overhanging flap structure that is generated by displacement synthesis when DNA polymerase encounters the 5'-end of a downstream Okazaki fragment. This is Flap endonuclease Xni from Aliivibrio salmonicida (strain LFI1238) (Vibrio salmonicida (strain LFI1238)).